The chain runs to 306 residues: D-alanine--D-alanine ligase (306 aa).

Positions 106 to 301 constitute an ATP-grasp domain; the sequence is KLLWQSAGIN…FEELVLKILG (196 aa). Residue 132 to 187 coordinates ATP; it reads AKELGLPLIVKPSREGSTIGLSKVREAGEVAAAWHLAARHDAMVLAEQFIEGTELT. Residues Asp-255, Glu-268, and Asn-270 each coordinate Mg(2+).

The protein belongs to the D-alanine--D-alanine ligase family. The cofactor is Mg(2+). Requires Mn(2+) as cofactor.

Its subcellular location is the cytoplasm. It carries out the reaction 2 D-alanine + ATP = D-alanyl-D-alanine + ADP + phosphate + H(+). Its pathway is cell wall biogenesis; peptidoglycan biosynthesis. Cell wall formation. The protein is D-alanine--D-alanine ligase of Nitrosospira multiformis (strain ATCC 25196 / NCIMB 11849 / C 71).